The chain runs to 651 residues: ATP-binding cassette sub-family G member 5 (651 aa).

Residues 1–32 (MGDLSSLTPGGSMGLQVNRGSQSSLEGAPATA) form a disordered region. At 1–383 (MGDLSSLTPG…RVTRNLVRNK (383 aa)) the chain is on the cytoplasmic side. In terms of domain architecture, ABC transporter spans 52 to 293 (RPWWDITSCR…FNDCGYPCPE (242 aa)). 86–93 (GSSGSGKT) is a binding site for ATP. A helical transmembrane segment spans residues 384-404 (LAVITRLLQNLIMGLFLLFFV). The 258-residue stretch at 388–645 (TRLLQNLIMG…ILGIVVFKIR (258 aa)) folds into the ABC transmembrane type-2 domain. Over 405–421 (LRVRSNVLKGAIQDRVG) the chain is Extracellular. Residues 422–442 (LLYQFVGATPYTGMLNAVNLF) traverse the membrane as a helical segment. Residues 443 to 467 (PVLRAVSDQESQDGLYQKWQMMLAY) lie on the Cytoplasmic side of the membrane. A helical membrane pass occupies residues 468-489 (ALHVLPFSVVATMIFSSVCYWT). Topologically, residues 490-500 (LGLHPEVARFG) are extracellular. Residues 501–521 (YFSAALLAPHLIGEFLTLVLL) traverse the membrane as a helical segment. The Cytoplasmic portion of the chain corresponds to 522-528 (GIVQNPN). Residues 529–549 (IVNSVVALLSIAGVLVGSGFL) form a helical membrane-spanning segment. The Extracellular portion of the chain corresponds to 550–623 (RNIQEMPIPF…PGATSRFTMN (74 aa)). Residues N584 and N591 are each glycosylated (N-linked (GlcNAc...) asparagine). A helical transmembrane segment spans residues 624 to 644 (FLILYSFIPALVILGIVVFKI). At 645–651 (RDHLISR) the chain is on the cytoplasmic side.

This sequence belongs to the ABC transporter superfamily. ABCG family. Eye pigment precursor importer (TC 3.A.1.204) subfamily. In terms of assembly, heterodimer with ABCG8. It depends on Mg(2+) as a cofactor. N-glycosylated. In terms of tissue distribution, strongly expressed in the liver, lower levels in the small intestine and colon.

The protein resides in the cell membrane. Its subcellular location is the apical cell membrane. It catalyses the reaction cholesterol(in) + ATP + H2O = cholesterol(out) + ADP + phosphate + H(+). The enzyme catalyses sitosterol(in) + ATP + H2O = sitosterol(out) + ADP + phosphate + H(+). With respect to regulation, the ATPase activity of the heterodimer is stimulated by cholate. Taurocholate, glycocholate, taurochenodeoxycholate, glycochenodeoxycholate and taurodeoxycholate also stimulate ATPase activity, but to a lower degree. Glycodeoxycholate has no significant effect on ATPase activity. ATPase activity is inhibited by vanadate and by berillium fluoride. In terms of biological role, ABCG5 and ABCG8 form an obligate heterodimer that mediates Mg(2+)- and ATP-dependent sterol transport across the cell membrane. Plays an essential role in the selective transport of dietary plant sterols and cholesterol in and out of the enterocytes and in the selective sterol excretion by the liver into bile. Required for normal sterol homeostasis. The heterodimer with ABCG8 has ATPase activity. This Homo sapiens (Human) protein is ATP-binding cassette sub-family G member 5.